The primary structure comprises 326 residues: Biotin synthase (326 aa).

Residues 51 to 278 (NEVQRSTLLS…TSYVRLSAGR (228 aa)) form the Radical SAM core domain. Residues Cys66, Cys70, and Cys73 each coordinate [4Fe-4S] cluster. Residues Cys110, Cys141, Cys201, and Arg273 each contribute to the [2Fe-2S] cluster site.

It belongs to the radical SAM superfamily. Biotin synthase family. Homodimer. The cofactor is [4Fe-4S] cluster. Requires [2Fe-2S] cluster as cofactor.

The catalysed reaction is (4R,5S)-dethiobiotin + (sulfur carrier)-SH + 2 reduced [2Fe-2S]-[ferredoxin] + 2 S-adenosyl-L-methionine = (sulfur carrier)-H + biotin + 2 5'-deoxyadenosine + 2 L-methionine + 2 oxidized [2Fe-2S]-[ferredoxin]. It functions in the pathway cofactor biosynthesis; biotin biosynthesis; biotin from 7,8-diaminononanoate: step 2/2. In terms of biological role, catalyzes the conversion of dethiobiotin (DTB) to biotin by the insertion of a sulfur atom into dethiobiotin via a radical-based mechanism. The chain is Biotin synthase from Azoarcus sp. (strain BH72).